Reading from the N-terminus, the 463-residue chain is ATP synthase subunit beta (463 aa).

Residue 152–159 coordinates ATP; that stretch reads GGAGVGKT.

This sequence belongs to the ATPase alpha/beta chains family. F-type ATPases have 2 components, CF(1) - the catalytic core - and CF(0) - the membrane proton channel. CF(1) has five subunits: alpha(3), beta(3), gamma(1), delta(1), epsilon(1). CF(0) has three main subunits: a(1), b(2) and c(9-12). The alpha and beta chains form an alternating ring which encloses part of the gamma chain. CF(1) is attached to CF(0) by a central stalk formed by the gamma and epsilon chains, while a peripheral stalk is formed by the delta and b chains.

It localises to the cell inner membrane. The enzyme catalyses ATP + H2O + 4 H(+)(in) = ADP + phosphate + 5 H(+)(out). In terms of biological role, produces ATP from ADP in the presence of a proton gradient across the membrane. The catalytic sites are hosted primarily by the beta subunits. This is ATP synthase subunit beta from Shewanella baltica (strain OS223).